The following is a 946-amino-acid chain: Protein translocase subunit SecA (946 aa).

ATP-binding positions include Gln87, 105–109 (GEGKT), and Asp524. Residues 904-933 (PAQTTDKADRDPNKPETWGKVGRNEDCPCG) form a disordered region. Residues Cys930, Cys932, Cys941, and His942 each contribute to the Zn(2+) site.

The protein belongs to the SecA family. As to quaternary structure, monomer and homodimer. Part of the essential Sec protein translocation apparatus which comprises SecA, SecYEG and auxiliary proteins SecDF-YajC and YidC. The cofactor is Zn(2+).

It localises to the cell inner membrane. It is found in the cytoplasm. The enzyme catalyses ATP + H2O + cellular proteinSide 1 = ADP + phosphate + cellular proteinSide 2.. In terms of biological role, part of the Sec protein translocase complex. Interacts with the SecYEG preprotein conducting channel. Has a central role in coupling the hydrolysis of ATP to the transfer of proteins into and across the cell membrane, serving both as a receptor for the preprotein-SecB complex and as an ATP-driven molecular motor driving the stepwise translocation of polypeptide chains across the membrane. The sequence is that of Protein translocase subunit SecA from Rhodopseudomonas palustris (strain TIE-1).